A 174-amino-acid chain; its full sequence is 3-hydroxydecanoyl-[acyl-carrier-protein] dehydratase (174 aa).

Residue histidine 73 is part of the active site.

The protein belongs to the thioester dehydratase family. FabA subfamily. As to quaternary structure, homodimer.

It is found in the cytoplasm. It carries out the reaction a (3R)-hydroxyacyl-[ACP] = a (2E)-enoyl-[ACP] + H2O. The catalysed reaction is (3R)-hydroxydecanoyl-[ACP] = (2E)-decenoyl-[ACP] + H2O. It catalyses the reaction (2E)-decenoyl-[ACP] = (3Z)-decenoyl-[ACP]. It participates in lipid metabolism; fatty acid biosynthesis. Functionally, necessary for the introduction of cis unsaturation into fatty acids. Catalyzes the dehydration of (3R)-3-hydroxydecanoyl-ACP to E-(2)-decenoyl-ACP and then its isomerization to Z-(3)-decenoyl-ACP. Can catalyze the dehydratase reaction for beta-hydroxyacyl-ACPs with saturated chain lengths up to 16:0, being most active on intermediate chain length. The protein is 3-hydroxydecanoyl-[acyl-carrier-protein] dehydratase of Teredinibacter turnerae (strain ATCC 39867 / T7901).